The sequence spans 464 residues: DNA primase DnaG (464 aa).

Positions 198–272 (DSIIVVEGRA…DVDYVARAPE (75 aa)) constitute a Toprim domain. Positions 204, 246, and 248 each coordinate Mg(2+). Basic and acidic residues predominate over residues 315–333 (RESEGERQPRQVTKPEPEV). The interval 315–351 (RESEGERQPRQVTKPEPEVVKAQPKAETPEEKREPAT) is disordered.

Belongs to the archaeal DnaG primase family. In terms of assembly, forms a ternary complex with MCM helicase and DNA. Component of the archaeal exosome complex. Requires Mg(2+) as cofactor.

The catalysed reaction is ssDNA + n NTP = ssDNA/pppN(pN)n-1 hybrid + (n-1) diphosphate.. In terms of biological role, RNA polymerase that catalyzes the synthesis of short RNA molecules used as primers for DNA polymerase during DNA replication. Also part of the exosome, which is a complex involved in RNA degradation. Acts as a poly(A)-binding protein that enhances the interaction between heteromeric, adenine-rich transcripts and the exosome. The protein is DNA primase DnaG of Thermococcus kodakarensis (strain ATCC BAA-918 / JCM 12380 / KOD1) (Pyrococcus kodakaraensis (strain KOD1)).